The chain runs to 601 residues: 3-hydroxy-3-methylglutaryl-coenzyme A reductase (601 aa).

Positions Met-1–Pro-34 are disordered. The next 2 membrane-spanning stretches (helical) occupy residues Ser-36–Val-58 and Ala-86–Val-106. The linker stretch occupies residues Gln-107 to Glu-179. A catalytic region spans residues Asp-180–Ser-601. Glu-273 (charge relay system) is an active-site residue. A glycan (N-linked (GlcNAc...) asparagine) is linked at Asn-337. Active-site charge relay system residues include Lys-405 and Asp-481. His-579 serves as the catalytic Proton donor. The N-linked (GlcNAc...) asparagine glycan is linked to Asn-583.

Belongs to the HMG-CoA reductase family.

It localises to the endoplasmic reticulum membrane. It catalyses the reaction (R)-mevalonate + 2 NADP(+) + CoA = (3S)-3-hydroxy-3-methylglutaryl-CoA + 2 NADPH + 2 H(+). It participates in metabolic intermediate biosynthesis; (R)-mevalonate biosynthesis; (R)-mevalonate from acetyl-CoA: step 3/3. Catalyzes the synthesis of mevalonate. The specific precursor of all isoprenoid compounds present in plants. The protein is 3-hydroxy-3-methylglutaryl-coenzyme A reductase (HMGR) of Catharanthus roseus (Madagascar periwinkle).